Consider the following 195-residue polypeptide: Large ribosomal subunit protein bL9 (195 aa).

This sequence belongs to the bacterial ribosomal protein bL9 family.

In terms of biological role, binds to the 23S rRNA. The chain is Large ribosomal subunit protein bL9 from Rhodopseudomonas palustris (strain TIE-1).